Here is a 279-residue protein sequence, read N- to C-terminus: Prephenate dehydratase (279 aa).

A Prephenate dehydratase domain is found at lysine 2–lysine 178. The region spanning leucine 194 to serine 272 is the ACT domain.

The enzyme catalyses prephenate + H(+) = 3-phenylpyruvate + CO2 + H2O. It participates in amino-acid biosynthesis; L-phenylalanine biosynthesis; phenylpyruvate from prephenate: step 1/1. This chain is Prephenate dehydratase (pheA), found in Lactococcus lactis subsp. cremoris (strain MG1363).